Reading from the N-terminus, the 123-residue chain is Large ribosomal subunit protein bL12 (123 aa).

It belongs to the bacterial ribosomal protein bL12 family. As to quaternary structure, homodimer. Part of the ribosomal stalk of the 50S ribosomal subunit. Forms a multimeric L10(L12)X complex, where L10 forms an elongated spine to which 2 to 4 L12 dimers bind in a sequential fashion. Binds GTP-bound translation factors.

Functionally, forms part of the ribosomal stalk which helps the ribosome interact with GTP-bound translation factors. Is thus essential for accurate translation. This is Large ribosomal subunit protein bL12 from Psychrobacter arcticus (strain DSM 17307 / VKM B-2377 / 273-4).